Consider the following 294-residue polypeptide: Ribosomal RNA small subunit methyltransferase A (294 aa).

S-adenosyl-L-methionine-binding residues include asparagine 33, leucine 35, glycine 60, glutamate 81, aspartate 106, and asparagine 131.

This sequence belongs to the class I-like SAM-binding methyltransferase superfamily. rRNA adenine N(6)-methyltransferase family. RsmA subfamily.

It localises to the cytoplasm. The catalysed reaction is adenosine(1518)/adenosine(1519) in 16S rRNA + 4 S-adenosyl-L-methionine = N(6)-dimethyladenosine(1518)/N(6)-dimethyladenosine(1519) in 16S rRNA + 4 S-adenosyl-L-homocysteine + 4 H(+). Specifically dimethylates two adjacent adenosines (A1518 and A1519) in the loop of a conserved hairpin near the 3'-end of 16S rRNA in the 30S particle. May play a critical role in biogenesis of 30S subunits. The chain is Ribosomal RNA small subunit methyltransferase A from Lactococcus lactis subsp. lactis (strain IL1403) (Streptococcus lactis).